Reading from the N-terminus, the 386-residue chain is Protein phosphatase methylesterase 1 (386 aa).

The tract at residues 20 to 48 (ILEKLKGGQEPNSNEEGSDSIGDLPSLKN) is disordered. Catalysis depends on residues S194, D222, and H348.

The protein belongs to the AB hydrolase superfamily.

It carries out the reaction [phosphatase 2A protein]-C-terminal L-leucine methyl ester + H2O = [phosphatase 2A protein]-C-terminal L-leucine + methanol + H(+). In terms of biological role, demethylates proteins that have been reversibly carboxymethylated. Demethylates the phosphatase PP2A catalytic subunit. This Candida glabrata (strain ATCC 2001 / BCRC 20586 / JCM 3761 / NBRC 0622 / NRRL Y-65 / CBS 138) (Yeast) protein is Protein phosphatase methylesterase 1 (PPE1).